Here is a 264-residue protein sequence, read N- to C-terminus: NAD-capped RNA hydrolase NudC (264 aa).

Substrate is bound at residue Arg-70. The Zn(2+) site is built by Cys-99 and Cys-102. Glu-112 is a binding site for substrate. Zn(2+) is bound by residues Cys-117 and Cys-122. Tyr-127 contacts substrate. One can recognise a Nudix hydrolase domain in the interval 128–252 (PVICPCIIVA…TIALKLIEHT (125 aa)). The a divalent metal cation site is built by Ala-161, Glu-177, and Glu-181. The Nudix box signature appears at 162–183 (GFVEVGETFEQAVHREVLEETG). 195–202 (QPWAFPNS) contributes to the substrate binding site. Glu-222 provides a ligand contact to a divalent metal cation. Ala-245 contacts substrate.

The protein belongs to the Nudix hydrolase family. NudC subfamily. Homodimer. The cofactor is Mg(2+). It depends on Mn(2+) as a cofactor. Requires Zn(2+) as cofactor.

The enzyme catalyses a 5'-end NAD(+)-phospho-ribonucleoside in mRNA + H2O = a 5'-end phospho-adenosine-phospho-ribonucleoside in mRNA + beta-nicotinamide D-ribonucleotide + 2 H(+). It carries out the reaction NAD(+) + H2O = beta-nicotinamide D-ribonucleotide + AMP + 2 H(+). It catalyses the reaction NADH + H2O = reduced beta-nicotinamide D-ribonucleotide + AMP + 2 H(+). In terms of biological role, mRNA decapping enzyme that specifically removes the nicotinamide adenine dinucleotide (NAD) cap from a subset of mRNAs by hydrolyzing the diphosphate linkage to produce nicotinamide mononucleotide (NMN) and 5' monophosphate mRNA. The NAD-cap is present at the 5'-end of some mRNAs and stabilizes RNA against 5'-processing. Has preference for mRNAs with a 5'-end purine. Catalyzes the hydrolysis of a broad range of dinucleotide pyrophosphates. This is NAD-capped RNA hydrolase NudC from Pasteurella multocida (strain Pm70).